The following is a 361-amino-acid chain: MKFVDEAFIDIAAGDGGSGCVSFSHEKYKEFGGPNGGDGGRGGHVYAVADVNLNTLVDFRFSRRHEARNGQHGMGSDMFGAKGDDIILKMPVGTILTDAETGEVLFELLVPGEQVLIAKGGDGGFGNLRFKSSTNRAPRSKTPGWPGERKNLKLELKVLADVGLLGMPNAGKSTFISAVSNARPRIADYPFTTLHPNLGVVRVGPEQSFVVADLPGLIEGASEGAGLGHLFLRHLQRTRLLLHIVDLAPFDEGVDPVAQAKAIVRELKKYDEALYEKPRWLVLNKLDMVDADKRAAIVKDFVKRFKFKGPVFEISALTREGCEHLIKTIYQHVKQVQKSEQPVEEVDPRFVPLPPESPETP.

Residues 1–159 (MKFVDEAFID…KNLKLELKVL (159 aa)) form the Obg domain. The OBG-type G domain occupies 160 to 334 (ADVGLLGMPN…LIKTIYQHVK (175 aa)). GTP-binding positions include 166–173 (GMPNAGKS), 191–195 (FTTLH), 213–216 (DLPG), 284–287 (NKLD), and 315–317 (SAL). 2 residues coordinate Mg(2+): serine 173 and threonine 193. A disordered region spans residues 339 to 361 (SEQPVEEVDPRFVPLPPESPETP). Residues 351–361 (VPLPPESPETP) are compositionally biased toward pro residues.

Belongs to the TRAFAC class OBG-HflX-like GTPase superfamily. OBG GTPase family. As to quaternary structure, monomer. The cofactor is Mg(2+).

The protein localises to the cytoplasm. In terms of biological role, an essential GTPase which binds GTP, GDP and possibly (p)ppGpp with moderate affinity, with high nucleotide exchange rates and a fairly low GTP hydrolysis rate. Plays a role in control of the cell cycle, stress response, ribosome biogenesis and in those bacteria that undergo differentiation, in morphogenesis control. This is GTPase Obg from Polaromonas sp. (strain JS666 / ATCC BAA-500).